Consider the following 449-residue polypeptide: Delta(8)-fatty-acid desaturase 2 (449 aa).

The 85-residue stretch at 7–91 folds into the Cytochrome b5 heme-binding domain; the sequence is KRYVTSEDLK…VRDHHVSDVS (85 aa). His42 and His65 together coordinate heme. 2 helical membrane-spanning segments follow: residues 113–133 and 138–158; these read VTLY…YGVL and IWAH…SAYV. Residues 160–164 carry the Histidine box-1 motif; the sequence is HDSGH. The chain crosses the membrane as a helical span at residues 176–196; the sequence is LIQLLSGNCLTGISIAWWKWT. The Histidine box-2 motif lies at 197-201; the sequence is HNAHH. A run of 3 helical transmembrane segments spans residues 255 to 275, 284 to 304, and 311 to 331; these read FYPV…LLLF, ALNI…VSFL, and FIFV…FCLN. The Histidine box-3 motif lies at 374–378; the sequence is QLEHH.

Belongs to the fatty acid desaturase type 1 family. Requires Fe cation as cofactor. In terms of tissue distribution, highly expressed in flowers and siliques. Expressed at low levels in roots, leaves and stems.

The protein resides in the endoplasmic reticulum membrane. The catalysed reaction is an N-acyl-(4R)-4-hydroxysphinganine + 2 Fe(II)-[cytochrome b5] + O2 + 2 H(+) = a (4R,8E)-4-hydroxysphingenine ceramide + 2 Fe(III)-[cytochrome b5] + 2 H2O. It catalyses the reaction an N-acyl-(4R)-4-hydroxysphinganine + 2 Fe(II)-[cytochrome b5] + O2 + 2 H(+) = a (4R,8Z)-4-hydroxysphing-8-enine ceramide + 2 Fe(III)-[cytochrome b5] + 2 H2O. Plays a major role as delta(8)-fatty-acid desaturase which introduces a double bond at the 8-position in the long-chain base (LCB) of ceramides with or without a hydroxy group at the 4-position. The enzyme produces both the 8E and 8Z isomers (in a 4:1 ratio). This structural modification contributes to the quantitative partitioning of ceramides between the two major sphingolipid classes, glucosylceramides and glycosylinositolphosphoryl ceramides. Sphingolipids are important membrane components involved in environmental stress responses, such as resistance to chilling, and act as cell signaling molecules. This Arabidopsis thaliana (Mouse-ear cress) protein is Delta(8)-fatty-acid desaturase 2 (SLD2).